Consider the following 979-residue polypeptide: MRRPRRPGGLGGSGGLRLLLCLLLLSSRPGGCSAVSAHGCLFDRRLCSHLEVCIQDGLFGQCQVGVGQARPLLQVTSPVLQRLQGVLRQLMSQGLSWHDDLTQYVISQEMERIPRLRPPEPRPRDRSGLAPKRPGPAGELLLQDIPTGSAPAAQHRLPQPPVGKGGAGASSSLSPLQAELLPPLLEHLLLPPQPPHPSLSYEPALLQPYLFHQFGSRDGSRVSEGSPGMVSVGPLPKAEAPALFSRTASKGIFGDHPGHSYGDLPGPSPAQLFQDSGLLYLAQELPAPSRARVPRLPEQGSSSRAEDSPEGYEKEGLGDRGEKPASPAVQPDAALQRLAAVLAGYGVELRQLTPEQLSTLLTLLQLLPKGAGRNPGGVVNVGADIKKTMEGPVEGRDTAELPARTSPMPGHPTASPTSSEVQQVPSPVSSEPPKAARPPVTPVLLEKKSPLGQSQPTVAGQPSARPAAEEYGYIVTDQKPLSLAAGVKLLEILAEHVHMSSGSFINISVVGPALTFRIRHNEQNLSLADVTQQAGLVKSELEAQTGLQILQTGVGQREEAAAVLPQTAHSTSPMRSVLLTLVALAGVAGLLVALAVALCVRQHARQQDKERLAALGPEGAHGDTTFEYQDLCRQHMATKSLFNRAEGPPEPSRVSSVSSQFSDAAQASPSSHSSTPSWCEEPAQANMDISTGHMILAYMEDHLRNRDRLAKEWQALCAYQAEPNTCATAQGEGNIKKNRHPDFLPYDHARIKLKVESSPSRSDYINASPIIEHDPRMPAYIATQGPLSHTIADFWQMVWESGCTVIVMLTPLVEDGVKQCDRYWPDEGASLYHVYEVNLVSEHIWCEDFLVRSFYLKNVQTQETRTLTQFHFLSWPAEGTPASTRPLLDFRRKVNKCYRGRSCPIIVHCSDGAGRTGTYILIDMVLNRMAKGVKEIDIAATLEHVRDQRPGLVRSKDQFEFALTAVAEEVNAILKALPQ.

The first 34 residues, 1 to 34 (MRRPRRPGGLGGSGGLRLLLCLLLLSSRPGGCSA), serve as a signal peptide directing secretion. Residues 35–131 (VSAHGCLFDR…RPRDRSGLAP (97 aa)) form an RESP18 homology domain region. Residues 35–575 (VSAHGCLFDR…QTAHSTSPMR (541 aa)) lie on the Lumenal side of the membrane. Cys-53 and Cys-62 are joined by a disulfide. 2 stretches are compositionally biased toward basic and acidic residues: residues 112-127 (RIPR…RDRS) and 304-323 (RAED…RGEK). Disordered stretches follow at residues 112–173 (RIPR…SSSL), 289–329 (SRAR…SPAV), and 393–439 (VEGR…ARPP). Position 308 is a phosphoserine (Ser-308). Residues 415 to 433 (SPTSSEVQQVPSPVSSEPP) show a composition bias toward low complexity. A glycan (O-linked (GalNAc...) threonine) is linked at Thr-441. A sufficient for dimerization of proICA512 region spans residues 449–575 (SPLGQSQPTV…QTAHSTSPMR (127 aa)). N-linked (GlcNAc...) asparagine glycans are attached at residues Asn-506 and Asn-524. The helical transmembrane segment at 576 to 600 (SVLLTLVALAGVAGLLVALAVALCV) threads the bilayer. The tract at residues 601–732 (RQHARQQDKE…PNTCATAQGE (132 aa)) is sufficient for dimerization of proICA512. Residues 601–979 (RQHARQQDKE…VNAILKALPQ (379 aa)) lie on the Cytoplasmic side of the membrane. The segment at 643–680 (NRAEGPPEPSRVSSVSSQFSDAAQASPSSHSSTPSWCE) is disordered. Residues 652 to 677 (SRVSSVSSQFSDAAQASPSSHSSTPS) are compositionally biased toward low complexity. Residues 709-969 (LAKEWQALCA…EFALTAVAEE (261 aa)) form the Tyrosine-protein phosphatase domain. Lys-754 participates in a covalent cross-link: Glycyl lysine isopeptide (Lys-Gly) (interchain with G-Cter in SUMO).

It belongs to the protein-tyrosine phosphatase family. Receptor class 8 subfamily. In terms of assembly, homodimer; shown for the unprocessed protein (proICA512) in the endoplasmic reticulum and resolved during protein maturation as ICA512-TMF seems to be predominantly monomeric in secretory granules; however, ICA512-CCF interacts with ICA512-TMF disrupting the ICA512-TMF:SNTB2 complex. The isolated lumenal RESP18 homology domain has been shown to form disulfide-linked homooligomers. Interacts (via cytoplasmic domain) with phosphorylated SNTB2; this protects PTPRN against cleavage by CAPN1 to produce ICA512-CCF. Dephosphorylation of SNTB2 upon insulin stimulation disrupts the interaction and results in PTPRN cleavage. Interacts with SNX19. ICA512-CCF interacts with PIAS4; in the nucleus. Interacts with STAT5B (phosphorylated); down-regulated by ICA512-CCF sumoylation; ICA512-CCF prevents STAT5B dephosphorylation; ICA512-CCF mediates interaction of STAT5B with PIAS4. Interacts (via RESP18 homology domain) with insulin and proinsulin. Interacts with PTPRN2, PTPRA and PTPRE. Post-translationally, N-glycosylated. In terms of processing, O-glycosylated with core 1 or possibly core 8 glycans. Subject to proteolytic cleavage at multiple sites. Subject to cleavage on a pair of basic residues. On exocytosis of secretory granules in pancreatic beta-cells ICA512-TMF is transiently inserted in the plasma-membrane and cleaved by mu-type calpain CPN1 to yield ICA512-CCF. Post-translationally, sumoylated at two sites including Lys-754. Sumoylation decreases interaction with STAT5. As to expression, expression is restricted to neuroendocrine cells. Found in pancreas, brain and pituitary.

The protein resides in the membrane. Its subcellular location is the cytoplasmic vesicle. It is found in the secretory vesicle membrane. The protein localises to the perikaryon. It localises to the cell projection. The protein resides in the axon. Its subcellular location is the synapse. It is found in the cell membrane. The protein localises to the endosome. It localises to the nucleus. Its function is as follows. Plays a role in vesicle-mediated secretory processes. Required for normal accumulation of secretory vesicles in hippocampus, pituitary and pancreatic islets. Required for the accumulation of normal levels of insulin-containing vesicles and preventing their degradation. Plays a role in insulin secretion in response to glucose stimuli. Required for normal accumulation of the neurotransmitters norepinephrine, dopamine and serotonin in the brain. In females, but not in males, required for normal accumulation and secretion of pituitary hormones, such as luteinizing hormone (LH) and follicle-stimulating hormone (FSH). Required to maintain normal levels of renin expression and renin release. Seems to lack intrinsic enzyme activity. May regulate catalytic active protein-tyrosine phosphatases such as PTPRA through dimerization. In terms of biological role, ICA512-TMF regulates dynamics and exocytosis of insulin secretory granules (SGs); binding of ICA512-TMF to SNTB2/beta-2-syntrophin is proposed to restrain SGs mobility and exocytosis by tethering them to the actin cytoskeleton depending on UTRN; the function is inhibited by cytoplasmic ICA512-CFF dimerizing with ICA512-TMF and displacing SNTB2. Functionally, ICA512-CCF translocated to the nucleus promotes expression of insulin and other granule-related genes; the function implicates binding to and regulating activity of STAT5B probably by preventing its dephosphorylation and potentially by inducing its sumoylation by recruiting PIAS4. Enhances pancreatic beta-cell proliferation by converging with signaling by STAT5B and STAT3. ICA512-CCF located in the cytoplasm regulates dynamics and exocytosis of insulin secretory granules (SGs) by dimerizing with ICA512-TMF and displacing SNTB2 thus enhancing SGs mobility and exocytosis. In Homo sapiens (Human), this protein is Receptor-type tyrosine-protein phosphatase-like N (PTPRN).